A 942-amino-acid polypeptide reads, in one-letter code: Homeobox transcription factor phx1 (942 aa).

Composition is skewed to polar residues over residues 1 to 19 (MRSYSNPENGGQINDNINY), 61 to 73 (HLQGEQQNPTNPN), 99 to 116 (ADNNSFDNVNSSKLTNPS), and 122 to 135 (IVKSESEPANSKQN). Disordered stretches follow at residues 1–54 (MRSY…MQLP), 61–80 (HLQGEQQNPTNPNYFPPEFD), 87–172 (KQEK…KKQR), 604–651 (WANQ…STST), and 892–922 (SSSGGVYASQPGASGYLSHDQSGSPFEDVYS). A compositionally biased stretch (basic and acidic residues) spans 142-151 (SVEKAKENVA). A compositionally biased stretch (low complexity) spans 153 to 164 (ESGTPESGGSTS). Residues 164 to 224 (SAPKSKKQRL…QNRRAKSKLI (61 aa)) constitute a DNA-binding region (homeobox). Polar residues-rich tracts occupy residues 604–614 (WANQLPRQPDS) and 630–641 (SHDTSSEYGNKS).

Its subcellular location is the nucleus. Its function is as follows. Trnascription factor that regulates the expression of the homocitrate synthase (HCS) lys4. The chain is Homeobox transcription factor phx1 (phx1) from Schizosaccharomyces pombe (strain 972 / ATCC 24843) (Fission yeast).